Reading from the N-terminus, the 934-residue chain is Complement component C6 (934 aa).

The N-terminal stretch at 1–21 is a signal peptide; that stretch reads MTRHLTLCFILLVMLIDKSEA. 11 cysteine pairs are disulfide-bonded: Cys22-Cys61, Cys24-Cys65, Cys35-Cys73, Cys39-Cys78, Cys82-Cys117, Cys93-Cys127, Cys96-Cys133, Cys140-Cys151, Cys146-Cys164, Cys158-Cys173, and Cys180-Cys218. TSP type-1 domains follow at residues 22–79 and 81–134; these read CFCD…QTCP and NCVL…KLCK. An LDL-receptor class A domain is found at 138-175; it reads TNCKNKFLCDSGRCIPSKLECNGENDCGDNSDERNCGR. The Ca(2+) site is built by Leu156, Asn159, Glu161, Asp163, Asp169, and Glu170. An MACPF domain is found at 176–522; it reads TKPVCTRIYT…EYAAKFDPCQ (347 aa). A beta stranded transmembrane segment spans residues 278–290; sequence FFPIPIFHFSEKN. A glycan (N-linked (GlcNAc...) asparagine) is linked at Asn324. Disulfide bonds link Cys399/Cys420, Cys499/Cys623, Cys521/Cys570, Cys523/Cys539, Cys526/Cys541, Cys543/Cys552, Cys577/Cys611, Cys589/Cys601, Cys644/Cys686, Cys672/Cys699, Cys704/Cys746, Cys732/Cys761, Cys773/Cys823, Cys784/Cys801, Cys786/Cys837, and Cys793/Cys816. A beta stranded membrane pass occupies residues 402–415; sequence YETKKLKFLYMEIH. An EGF-like domain is found at 523-553; the sequence is CAPCPNNGRPRLSGTECLCVCQSGTYGENCE. The TSP type-1 3 domain maps to 565-612; sequence DGNWGCWSSWSACNAAYRRSRTRECNNPAPQRGGQSCGGKDQQEEDCT. 2 CCP regions span residues 611 to 688 and 689 to 765; these read CTVS…RCLP and DRTW…EQAI. Sushi domains follow at residues 642 to 701 and 702 to 763; these read SGCS…ECQR and TSCL…TCEQ. The interval 642–934 is C5b-binding domain; that stretch reads SGCSQPPLPE…EILNPGRCPD (293 aa). The factor I module (FIM) 1 stretch occupies residues 766–840; sequence LTKSKDLCPP…FVHSGSCQEG (75 aa). The Kazal-like 1 domain occupies 785–839; sequence ICMSPEEDCSAYSEDLCIFDGGSSQYFTSSACKFLAGKCLNNTQSHFVHSGSCQE. N-linked (GlcNAc...) asparagine glycosylation is found at Asn825, Asn855, and Asn872. The segment at 858–934 is factor I module (FIM) 2; sequence KRVSCGYNTC…EILNPGRCPD (77 aa). 5 disulfide bridges follow: Cys862-Cys873, Cys867-Cys919, Cys880-Cys897, Cys882-Cys932, and Cys888-Cys912. The 59-residue stretch at 876–934 folds into the Kazal-like 2 domain; sequence HTSNCVCLLPPQCSKDENQLYCVKIGSSMREKTVNICTLGAVRCANIKVEILNPGRCPD.

It belongs to the complement C6/C7/C8/C9 family. As to quaternary structure, component of the membrane attack complex (MAC), composed of complement C5b, C6, C7, C8A, C8B, C8G and multiple copies of the pore-forming subunit C9. Post-translationally, all cysteine residues are assumed to be cross-linked to one another. Individual modules containing an even number of conserved cysteine residues are supposed to have disulfide linkages only within the same module.

Its subcellular location is the secreted. It localises to the target cell membrane. Its activity is regulated as follows. Membrane attack complex (MAC) assembly is inhibited by CD59, thereby protecting self-cells from damage during complement activation. MAC assembly is also inhibited by clusterin (CLU) chaperones that inhibit polymerization of C9. Component of the membrane attack complex (MAC), a multiprotein complex activated by the complement cascade, which inserts into a target cell membrane and forms a pore, leading to target cell membrane rupture and cell lysis. The MAC is initiated by proteolytic cleavage of C5 into complement C5b in response to the classical, alternative, lectin and GZMK complement pathways. The complement pathways consist in a cascade of proteins that leads to phagocytosis and breakdown of pathogens and signaling that strengthens the adaptive immune system. Together with component C5b, involved in MAC complex assembly: complement C5b and C6 associate with the outer leaflet of target cell membrane, reducing the energy for membrane bending. The sequence is that of Complement component C6 from Mus musculus (Mouse).